We begin with the raw amino-acid sequence, 411 residues long: Prostaglandin E2 receptor EP3 subtype (411 aa).

Over 1-49 (MKETRGDGGSAPFCTRLNHSYPGMWAPEARGNLTRPPGPGEDCGSVSVA) the chain is Extracellular. N-linked (GlcNAc...) asparagine glycosylation is found at N18 and N32. Residues 50–74 (FPITMLITGFVGNALAMLLVSRSYR) traverse the membrane as a helical segment. The Cytoplasmic segment spans residues 75-87 (RRESKRKKSFLLC). Residues 88–108 (IGWLALTDLVGQLLTSPVVIL) form a helical membrane-spanning segment. Residues 109 to 127 (VYLSKQRWEQLDPSGRLCT) are Extracellular-facing. C126 and C204 form a disulfide bridge. Residues 128–149 (FFGLTMTVFGLSSLFIASAMAV) form a helical membrane-spanning segment. Over 150 to 171 (ERALAIRAPHWYASHMKTRATR) the chain is Cytoplasmic. A helical transmembrane segment spans residues 172 to 193 (AVLLGVWLAVLAFALLPVLGVG). Topologically, residues 194–223 (QYTIQWPGTWCFISTGRGDNGTSSSHNWGN) are extracellular. A glycan (N-linked (GlcNAc...) asparagine) is linked at N213. The helical transmembrane segment at 224-249 (LFFASTFAFLGLLALAITFTCNLATI) threads the bilayer. The Cytoplasmic portion of the chain corresponds to 250 to 279 (KALVSRCRAKAAASQSSAQWGRITTETAIQ). The helical transmembrane segment at 280–303 (LMGIMCVLSVCWSPLLIMMLKMIF) threads the bilayer. Residues 304–323 (NQTSVEHCKTDTGKQKECNF) lie on the Extracellular side of the membrane. Residues 324–345 (FLIAVRLASLNQILDPWVYLLL) traverse the membrane as a helical segment. The Cytoplasmic portion of the chain corresponds to 346 to 411 (RKILLRKFCQ…ADPGARPYQQ (66 aa)). Basic and acidic residues predominate over residues 367–390 (IQRENRNVSHSGQHEEARDSEKSK). Residues 367-392 (IQRENRNVSHSGQHEEARDSEKSKTI) are disordered.

The protein belongs to the G-protein coupled receptor 1 family. In terms of assembly, interacts (via C-terminus) with MKLN1. As to expression, in the kidney cortex and medulla, adrenal gland and stomach. In kidney, expression is higher in tubules in the outer medulla, with lower levels in cortex. In kidney cortex, expression is restricted to distal tubules.

It is found in the cell membrane. Receptor for prostaglandin E2 (PGE2). Required for normal development of fever in response to pyrinogens, including IL1B, prostaglandin E2 and bacterial lipopolysaccharide (LPS). Required for normal potentiation of platelet aggregation by prostaglandin E2, and thus plays a role in the regulation of blood coagulation. Required for increased HCO3(-) secretion in the duodenum in response to mucosal acidification, and thereby contributes to the protection of the mucosa against acid-induced ulceration. Not required for normal kidney function, normal urine volume and osmolality. This is Prostaglandin E2 receptor EP3 subtype (PTGER3) from Oryctolagus cuniculus (Rabbit).